The primary structure comprises 159 residues: Acetolactate synthase small subunit (159 aa).

One can recognise an ACT domain in the interval Ile-5–Asp-79.

This sequence belongs to the acetolactate synthase small subunit family. As to quaternary structure, dimer of large and small chains.

The catalysed reaction is 2 pyruvate + H(+) = (2S)-2-acetolactate + CO2. Its pathway is amino-acid biosynthesis; L-isoleucine biosynthesis; L-isoleucine from 2-oxobutanoate: step 1/4. It participates in amino-acid biosynthesis; L-valine biosynthesis; L-valine from pyruvate: step 1/4. This Buchnera aphidicola subsp. Baizongia pistaciae (strain Bp) protein is Acetolactate synthase small subunit (ilvH).